A 186-amino-acid polypeptide reads, in one-letter code: Pyridoxal 5'-phosphate synthase subunit PdxT (186 aa).

47 to 49 provides a ligand contact to L-glutamine; the sequence is GES. Residue cysteine 76 is the Nucleophile of the active site. L-glutamine-binding positions include arginine 102 and 130–131; that span reads IR. Residues histidine 166 and glutamate 168 each act as charge relay system in the active site.

It belongs to the glutaminase PdxT/SNO family. As to quaternary structure, in the presence of PdxS, forms a dodecamer of heterodimers. Only shows activity in the heterodimer.

It catalyses the reaction aldehydo-D-ribose 5-phosphate + D-glyceraldehyde 3-phosphate + L-glutamine = pyridoxal 5'-phosphate + L-glutamate + phosphate + 3 H2O + H(+). The enzyme catalyses L-glutamine + H2O = L-glutamate + NH4(+). Its pathway is cofactor biosynthesis; pyridoxal 5'-phosphate biosynthesis. Its function is as follows. Catalyzes the hydrolysis of glutamine to glutamate and ammonia as part of the biosynthesis of pyridoxal 5'-phosphate. The resulting ammonia molecule is channeled to the active site of PdxS. This is Pyridoxal 5'-phosphate synthase subunit PdxT from Staphylococcus epidermidis (strain ATCC 35984 / DSM 28319 / BCRC 17069 / CCUG 31568 / BM 3577 / RP62A).